The primary structure comprises 271 residues: Ribose-phosphate pyrophosphokinase 2 (271 aa).

ATP-binding positions include 34 to 36 (DGE) and 82 to 83 (RQ). Positions 115 and 150 each coordinate Mg(2+). Lys-173 is an active-site residue. Residues Arg-175, Asp-199, and 203–207 (STGGT) contribute to the D-ribose 5-phosphate site.

The protein belongs to the ribose-phosphate pyrophosphokinase family. Class III (archaeal) subfamily. It depends on Mg(2+) as a cofactor.

The protein localises to the cytoplasm. It catalyses the reaction D-ribose 5-phosphate + ATP = 5-phospho-alpha-D-ribose 1-diphosphate + AMP + H(+). Its pathway is metabolic intermediate biosynthesis; 5-phospho-alpha-D-ribose 1-diphosphate biosynthesis; 5-phospho-alpha-D-ribose 1-diphosphate from D-ribose 5-phosphate (route I): step 1/1. In terms of biological role, involved in the biosynthesis of the central metabolite phospho-alpha-D-ribosyl-1-pyrophosphate (PRPP) via the transfer of pyrophosphoryl group from ATP to 1-hydroxyl of ribose-5-phosphate (Rib-5-P). The chain is Ribose-phosphate pyrophosphokinase 2 from Archaeoglobus fulgidus (strain ATCC 49558 / DSM 4304 / JCM 9628 / NBRC 100126 / VC-16).